A 348-amino-acid chain; its full sequence is Erlin-1 (348 aa).

The Cytoplasmic segment spans residues 1–7 (MNMTQAR). A helical transmembrane segment spans residues 8-28 (VLVAAVVGLVAVLLYASIHKI). Residues 29-348 (EEGHLAVYYR…NLIQNKESTG (320 aa)) lie on the Lumenal side of the membrane. The N-linked (GlcNAc...) asparagine glycan is linked to Asn-108. Lys-269 bears the N6-acetyllysine mark. The span at 321–333 (TGRESSHPSKEAL) shows a compositional bias: basic and acidic residues. The segment at 321–348 (TGRESSHPSKEALEPSGENLIQNKESTG) is disordered. Polar residues predominate over residues 339-348 (NLIQNKESTG).

The protein belongs to the band 7/mec-2 family. As to quaternary structure, forms a heteromeric complex with ERLIN2. In complex with ERLIN2, interacts with RNF170. Interacts with AMFR and SYVN1. In terms of processing, deubiquitinated by USP25; leading to stabilization.

It is found in the endoplasmic reticulum membrane. Component of the ERLIN1/ERLIN2 complex which mediates the endoplasmic reticulum-associated degradation (ERAD) of inositol 1,4,5-trisphosphate receptors (IP3Rs). Involved in regulation of cellular cholesterol homeostasis by regulation the SREBP signaling pathway. Binds cholesterol and may promote ER retention of the SCAP-SREBF complex. The sequence is that of Erlin-1 from Pongo abelii (Sumatran orangutan).